The primary structure comprises 266 residues: 4-hydroxy-tetrahydrodipicolinate reductase (266 aa).

10-15 (GPRGRM) serves as a coordination point for NAD(+). Lysine 38 provides a ligand contact to NADP(+). NAD(+) is bound by residues 99 to 101 (GTT) and 125 to 128 (APNF). The Proton donor/acceptor role is filled by histidine 155. Histidine 156 contacts (S)-2,3,4,5-tetrahydrodipicolinate. Catalysis depends on lysine 159, which acts as the Proton donor. Position 165 to 166 (165 to 166 (GT)) interacts with (S)-2,3,4,5-tetrahydrodipicolinate.

Belongs to the DapB family.

The protein localises to the cytoplasm. The catalysed reaction is (S)-2,3,4,5-tetrahydrodipicolinate + NAD(+) + H2O = (2S,4S)-4-hydroxy-2,3,4,5-tetrahydrodipicolinate + NADH + H(+). It carries out the reaction (S)-2,3,4,5-tetrahydrodipicolinate + NADP(+) + H2O = (2S,4S)-4-hydroxy-2,3,4,5-tetrahydrodipicolinate + NADPH + H(+). It functions in the pathway amino-acid biosynthesis; L-lysine biosynthesis via DAP pathway; (S)-tetrahydrodipicolinate from L-aspartate: step 4/4. Catalyzes the conversion of 4-hydroxy-tetrahydrodipicolinate (HTPA) to tetrahydrodipicolinate. The polypeptide is 4-hydroxy-tetrahydrodipicolinate reductase (Bacillus mycoides (strain KBAB4) (Bacillus weihenstephanensis)).